We begin with the raw amino-acid sequence, 484 residues long: Chromosomal replication initiator protein DnaA (484 aa).

Positions 1 to 73 (MQEGKNIWSL…EILIEKGHST (73 aa)) are domain I, interacts with DnaA modulators. The tract at residues 73-140 (TINVEFIHSQ…EEIHIKYRNP (68 aa)) is domain II. Residues 141–357 (FLKKKYTFEN…AAVTKLKAHI (217 aa)) form a domain III, AAA+ region region. 4 residues coordinate ATP: glycine 185, glycine 187, lysine 188, and threonine 189. Positions 358–484 (DLEDIEIDTN…IELMNKINKN (127 aa)) are domain IV, binds dsDNA.

Belongs to the DnaA family. In terms of assembly, oligomerizes as a right-handed, spiral filament on DNA at oriC.

The protein localises to the cytoplasm. Its function is as follows. Plays an essential role in the initiation and regulation of chromosomal replication. ATP-DnaA binds to the origin of replication (oriC) to initiate formation of the DNA replication initiation complex once per cell cycle. Binds the DnaA box (a 9 base pair repeat at the origin) and separates the double-stranded (ds)DNA. Forms a right-handed helical filament on oriC DNA; dsDNA binds to the exterior of the filament while single-stranded (ss)DNA is stabiized in the filament's interior. The ATP-DnaA-oriC complex binds and stabilizes one strand of the AT-rich DNA unwinding element (DUE), permitting loading of DNA polymerase. After initiation quickly degrades to an ADP-DnaA complex that is not apt for DNA replication. Binds acidic phospholipids. The polypeptide is Chromosomal replication initiator protein DnaA (Borrelia recurrentis (strain A1)).